Consider the following 644-residue polypeptide: Prolyl 3,4-dihydroxylase TPA1 (644 aa).

A Fe2OG dioxygenase domain is found at 141–247 (SKTDMSINTY…RLSIQGWYHI (107 aa)). Fe cation-binding residues include H159 and D161. Y173 provides a ligand contact to 2-oxoglutarate. Residue H227 coordinates Fe cation. Position 238 (R238) interacts with 2-oxoglutarate. S607 carries the post-translational modification Phosphoserine.

It belongs to the TPA1 family. As to quaternary structure, monomer and homodimer. Interacts with FRK1, eRF1 (SUP1), eRF3 (SUP35) and polyadenylate-binding protein PAB1. Interacts with ETT1. Requires Fe(2+) as cofactor. The cofactor is L-ascorbate.

Its subcellular location is the nucleus. The enzyme catalyses [ribosomal protein uS12]-L-proline + 2-oxoglutarate + O2 = [ribosomal protein uS12]-(3S)-3-hydroxy-L-proline + succinate + CO2. It carries out the reaction [ribosomal protein uS12]-(3S)-3-hydroxy-L-proline + 2-oxoglutarate + O2 = [ribosomal protein uS12]-(3S)-3,4-dihydroxy-L-proline + succinate + CO2. Functionally, prolyl 3,4-dihydroxylase that catalyzes 3,4-dihydroxylation of 'Pro-64' of small ribosomal subunit uS12 (RPS23A and RPS23B), thereby regulating protein translation termination efficiency. Part of a messenger ribonucleoprotein (mRNP) complex at the 3'-UTR of mRNAs. It associates specifically with components of the translation termination complex and is involved in both translation termination and in regulation of normal mRNA decay through translation termination-coupled poly(A) shortening. This Saccharomyces cerevisiae (strain ATCC 204508 / S288c) (Baker's yeast) protein is Prolyl 3,4-dihydroxylase TPA1.